The primary structure comprises 286 residues: Probable endonuclease 4 (286 aa).

Residues His-71, His-111, Glu-147, Asp-181, His-184, His-218, Asp-231, His-233, and Glu-263 each coordinate Zn(2+).

The protein belongs to the AP endonuclease 2 family. It depends on Zn(2+) as a cofactor.

It catalyses the reaction Endonucleolytic cleavage to 5'-phosphooligonucleotide end-products.. Functionally, endonuclease IV plays a role in DNA repair. It cleaves phosphodiester bonds at apurinic or apyrimidinic (AP) sites, generating a 3'-hydroxyl group and a 5'-terminal sugar phosphate. The chain is Probable endonuclease 4 from Vibrio cholerae serotype O1 (strain ATCC 39541 / Classical Ogawa 395 / O395).